The sequence spans 134 residues: MRFSIFSTLLVSLATLSTAAELGIEKTHEVECTRKTVKGDTVQMHYKGTLQSDGSEFDSSYKRNSPLKFKVGSGMVIKGWDEGLLDMCIGEKRTLTIPPEYGYGSRGVGPIPGGATLIFETELVGIDGVSKDEL.

Residues 1–19 form the signal peptide; sequence MRFSIFSTLLVSLATLSTA. The region spanning 39 to 127 is the PPIase FKBP-type domain; sequence GDTVQMHYKG…IFETELVGID (89 aa). Residues 131 to 134 carry the Prevents secretion from ER motif; it reads KDEL.

The protein belongs to the FKBP-type PPIase family. FKBP2 subfamily.

The protein resides in the endoplasmic reticulum. It carries out the reaction [protein]-peptidylproline (omega=180) = [protein]-peptidylproline (omega=0). Inhibited by both FK506 and rapamycin. In terms of biological role, PPIases accelerate the folding of proteins. It catalyzes the cis-trans isomerization of proline imidic peptide bonds in oligopeptides. In Aspergillus oryzae (strain ATCC 42149 / RIB 40) (Yellow koji mold), this protein is FK506-binding protein 2 (fpr2).